The primary structure comprises 277 residues: Purine nucleoside phosphorylase 2 (277 aa).

Residues H65, 85–87 (RGH), and A117 each bind phosphate. E197 is a binding site for a purine D-ribonucleoside. S216 contributes to the phosphate binding site. N239 contacts a purine D-ribonucleoside.

The protein belongs to the PNP/MTAP phosphorylase family. In terms of assembly, hexamer. Dimer of trimers.

It catalyses the reaction a purine D-ribonucleoside + phosphate = a purine nucleobase + alpha-D-ribose 1-phosphate. The protein operates within purine metabolism; xanthosine degradation. Its pathway is purine metabolism; purine nucleoside salvage. With respect to regulation, rapidly inactivated by p-chloromercuriphenylsulfonic acid (p-CMB). Dithiothreitol incubation restores the activity. Functionally, the purine nucleoside phosphorylases catalyze the phosphorolytic breakdown of the N-glycosidic bond in the beta-(deoxy)ribonucleoside molecules, with the formation of the corresponding free purine bases and pentose-1-phosphate. This protein can degrade all purine nucleosides including xanthosine, inosine and guanosine, but cannot cleave adenosine, deoxyadenosine or hypoxanthine arabinoside. Has a preference for the neutral over the monoanionic form of xanthosine. The chain is Purine nucleoside phosphorylase 2 (xapA) from Escherichia coli (strain K12).